Consider the following 207-residue polypeptide: GTP-binding protein Rheb homolog 1 (207 aa).

Gly25, Lys26, Ser27, Tyr42, Thr45, Asn126, Asp129, and Ala157 together coordinate GTP. Ser27 lines the Mg(2+) pocket. Residues 42-50 carry the Effector region motif; the sequence is YESTIEDQH. Thr45 provides a ligand contact to Mg(2+). The segment covering 180-193 has biased composition (polar residues); that stretch reads NLSPTERPNGNSPK. The tract at residues 180–207 is disordered; that stretch reads NLSPTERPNGNSPKRNPFKDDGKPCSIS. A compositionally biased stretch (basic and acidic residues) spans 196 to 207; sequence PFKDDGKPCSIS. A Cysteine methyl ester modification is found at Cys204. The S-farnesyl cysteine moiety is linked to residue Cys204. Positions 205–207 are cleaved as a propeptide — removed in mature form; the sequence is SIS.

This sequence belongs to the small GTPase superfamily. Rheb family.

It is found in the cell membrane. The enzyme catalyses GTP + H2O = GDP + phosphate + H(+). Binds GTP and exhibits intrinsic GTPase activity. This Caenorhabditis elegans protein is GTP-binding protein Rheb homolog 1 (rheb-1).